Here is a 343-residue protein sequence, read N- to C-terminus: Heat-inducible transcription repressor HrcA (343 aa).

The protein belongs to the HrcA family.

Its function is as follows. Negative regulator of class I heat shock genes (grpE-dnaK-dnaJ and groELS operons). Prevents heat-shock induction of these operons. The protein is Heat-inducible transcription repressor HrcA of Caldanaerobacter subterraneus subsp. tengcongensis (strain DSM 15242 / JCM 11007 / NBRC 100824 / MB4) (Thermoanaerobacter tengcongensis).